Here is a 1171-residue protein sequence, read N- to C-terminus: Phytochrome B (1171 aa).

The segment covering 1–19 has biased composition (low complexity); the sequence is MASGSRATPTRSPSSARPA. The tract at residues 1-53 is disordered; sequence MASGSRATPTRSPSSARPAAPRHQHHHSQSSGGSTSRAGGGGGGGGGGGGGAA. Residues 38–52 show a composition bias toward gly residues; sequence AGGGGGGGGGGGGGA. The GAF domain maps to 259-442; that stretch reads DVKLLCDTVV…AFGLQLNMEL (184 aa). Cys-364 is a phytochromobilin binding site. PAS domains are found at residues 661–732 and 795–866; these read VARE…LRGD and DYKA…MIVL. One can recognise a Histidine kinase domain in the interval 943–1161; the sequence is YIYQEIKNPL…FFHIVLELPQ (219 aa).

It belongs to the phytochrome family. Homodimer. In terms of processing, contains one covalently linked phytochromobilin chromophore.

Regulatory photoreceptor which exists in two forms that are reversibly interconvertible by light: the Pr form that absorbs maximally in the red region of the spectrum and the Pfr form that absorbs maximally in the far-red region. Photoconversion of Pr to Pfr induces an array of morphogenic responses, whereas reconversion of Pfr to Pr cancels the induction of those responses. Pfr controls the expression of a number of nuclear genes including those encoding the small subunit of ribulose-bisphosphate carboxylase, chlorophyll A/B binding protein, protochlorophyllide reductase, rRNA, etc. It also controls the expression of its own gene(s) in a negative feedback fashion. The chain is Phytochrome B (PHYB) from Oryza sativa subsp. indica (Rice).